Consider the following 230-residue polypeptide: Orotidine 5'-phosphate decarboxylase (230 aa).

Residues D8, K32, 59–68 (DLKLYDIPNT), T118, R178, Q187, G207, and R208 contribute to the substrate site. K61 functions as the Proton donor in the catalytic mechanism.

This sequence belongs to the OMP decarboxylase family. Type 1 subfamily. In terms of assembly, homodimer.

The enzyme catalyses orotidine 5'-phosphate + H(+) = UMP + CO2. The protein operates within pyrimidine metabolism; UMP biosynthesis via de novo pathway; UMP from orotate: step 2/2. In terms of biological role, catalyzes the decarboxylation of orotidine 5'-monophosphate (OMP) to uridine 5'-monophosphate (UMP). The protein is Orotidine 5'-phosphate decarboxylase of Nautilia profundicola (strain ATCC BAA-1463 / DSM 18972 / AmH).